The primary structure comprises 218 residues: Ribose-5-phosphate isomerase A (218 aa).

Residues 28–31 (SGST), 81–84 (DGAD), and 94–97 (KGGG) contribute to the substrate site. E103 serves as the catalytic Proton acceptor. Position 121 (K121) interacts with substrate.

The protein belongs to the ribose 5-phosphate isomerase family. Homodimer.

It carries out the reaction aldehydo-D-ribose 5-phosphate = D-ribulose 5-phosphate. It functions in the pathway carbohydrate degradation; pentose phosphate pathway; D-ribose 5-phosphate from D-ribulose 5-phosphate (non-oxidative stage): step 1/1. Its function is as follows. Catalyzes the reversible conversion of ribose-5-phosphate to ribulose 5-phosphate. The protein is Ribose-5-phosphate isomerase A of Dichelobacter nodosus (strain VCS1703A).